We begin with the raw amino-acid sequence, 410 residues long: ACT domain-containing protein ACR10 (410 aa).

3 consecutive ACT domains span residues 22-105 (VITI…SESQ), 114-197 (LLKL…LVGP), and 245-324 (LIHI…VVMM).

Its function is as follows. May bind amino acids. In Arabidopsis thaliana (Mouse-ear cress), this protein is ACT domain-containing protein ACR10.